A 159-amino-acid chain; its full sequence is MKIKLVVVGKLKEKYLKDGIAEYVKRMGTMLPLEIIELADEKIPDNASEKEAEALKKREGEKILSRIQAGDQLAILAIQGKLMSSEEVADFVKKAEVYGTGNLVFVIGGSLGLSKEVYQRSDLQISFGRMTLPHQLMRLVLVEQIYRAQMINRGSAYHK.

S-adenosyl-L-methionine-binding positions include isoleucine 75, glycine 108, and phenylalanine 127–leucine 132.

The protein belongs to the RNA methyltransferase RlmH family. Homodimer.

It is found in the cytoplasm. The enzyme catalyses pseudouridine(1915) in 23S rRNA + S-adenosyl-L-methionine = N(3)-methylpseudouridine(1915) in 23S rRNA + S-adenosyl-L-homocysteine + H(+). In terms of biological role, specifically methylates the pseudouridine at position 1915 (m3Psi1915) in 23S rRNA. This Lactococcus lactis subsp. lactis (strain IL1403) (Streptococcus lactis) protein is Ribosomal RNA large subunit methyltransferase H.